A 160-amino-acid chain; its full sequence is uncharacterized protein (160 aa).

Positions 20-152 (EREIWVLYMK…VYEGLSILSR (133 aa)) constitute an HTH marR-type domain. Residues 66–89 (VSDIAEKMGASLSNTTGLLDRLEK) constitute a DNA-binding region (H-T-H motif).

This is an uncharacterized protein from Bacillus subtilis (strain 168).